A 490-amino-acid chain; its full sequence is tRNA-guanine(15) transglycosylase (490 aa).

Asp90 serves as the catalytic Nucleophile. Positions 125 and 193 each coordinate substrate. The Zn(2+) site is built by Cys276, Cys278, and Cys281.

This sequence belongs to the archaeosine tRNA-ribosyltransferase family. The cofactor is Zn(2+).

The catalysed reaction is guanosine(15) in tRNA + 7-cyano-7-deazaguanine = 7-cyano-7-carbaguanosine(15) in tRNA + guanine. It functions in the pathway tRNA modification; archaeosine-tRNA biosynthesis. Its function is as follows. Exchanges the guanine residue with 7-cyano-7-deazaguanine (preQ0) at position 15 in the dihydrouridine loop (D-loop) of archaeal tRNAs. This chain is tRNA-guanine(15) transglycosylase, found in Methanosarcina acetivorans (strain ATCC 35395 / DSM 2834 / JCM 12185 / C2A).